An 85-amino-acid chain; its full sequence is Phosphocarrier protein HPr (85 aa).

An HPr domain is found at 1–85; the sequence is MFQRDIKITT…DLAKFLTTLK (85 aa). The active-site Pros-phosphohistidine intermediate is the H15.

Belongs to the HPr family.

Its subcellular location is the cytoplasm. General (non sugar-specific) component of the phosphoenolpyruvate-dependent sugar phosphotransferase system (sugar PTS). This major carbohydrate active-transport system catalyzes the phosphorylation of incoming sugar substrates concomitantly with their translocation across the cell membrane. The phosphoryl group from phosphoenolpyruvate (PEP) is transferred to the phosphoryl carrier protein HPr by enzyme I. Phospho-HPr then transfers it to the PTS EIIA domain. This Buchnera aphidicola subsp. Baizongia pistaciae (strain Bp) protein is Phosphocarrier protein HPr (ptsH).